The primary structure comprises 387 residues: Xylose isomerase (387 aa).

Catalysis depends on residues His53 and Asp56. Glu180, Glu216, His219, Asp244, Asp254, Asp256, and Asp286 together coordinate Mg(2+).

This sequence belongs to the xylose isomerase family. As to quaternary structure, homotetramer. The cofactor is Mg(2+).

The protein localises to the cytoplasm. The enzyme catalyses alpha-D-xylose = alpha-D-xylulofuranose. This Thermus caldophilus protein is Xylose isomerase (xylA).